The following is a 157-amino-acid chain: MPRRREVPKRDVLPDPKFGSVELTKFMNALMVDGKKSVDERIVYGALEQTAKKVQGKEAIEVFNEAIDNAKPIVEVKSRRVGGANYQVPVEVRPSRRLALAMRWVRDAARKRGEKSMDLRLADELIDAAEGRGGAMKKREEVHRMAEANKAFSHFRF.

It belongs to the universal ribosomal protein uS7 family. In terms of assembly, part of the 30S ribosomal subunit. Contacts proteins S9 and S11.

One of the primary rRNA binding proteins, it binds directly to 16S rRNA where it nucleates assembly of the head domain of the 30S subunit. Is located at the subunit interface close to the decoding center, probably blocks exit of the E-site tRNA. This chain is Small ribosomal subunit protein uS7, found in Eikenella corrodens.